The sequence spans 327 residues: tRNA uridine(34) hydroxylase (327 aa).

A Rhodanese domain is found at 123–217 (SDPEVLVVDT…YLEEVPQEQS (95 aa)). Catalysis depends on Cys-177, which acts as the Cysteine persulfide intermediate.

This sequence belongs to the TrhO family.

The catalysed reaction is uridine(34) in tRNA + AH2 + O2 = 5-hydroxyuridine(34) in tRNA + A + H2O. In terms of biological role, catalyzes oxygen-dependent 5-hydroxyuridine (ho5U) modification at position 34 in tRNAs. The protein is tRNA uridine(34) hydroxylase of Vibrio cholerae serotype O1 (strain ATCC 39315 / El Tor Inaba N16961).